Reading from the N-terminus, the 553-residue chain is Urocanate hydratase (553 aa).

Residues 45–46 (GG), Gln123, 169–171 (GMG), Asp189, Arg194, 235–236 (NA), 256–260 (QTSAH), 266–267 (YV), Tyr315, and Gly485 contribute to the NAD(+) site.

It belongs to the urocanase family. NAD(+) serves as cofactor.

Its subcellular location is the cytoplasm. The enzyme catalyses 4-imidazolone-5-propanoate = trans-urocanate + H2O. It functions in the pathway amino-acid degradation; L-histidine degradation into L-glutamate; N-formimidoyl-L-glutamate from L-histidine: step 2/3. In terms of biological role, catalyzes the conversion of urocanate to 4-imidazolone-5-propionate. The polypeptide is Urocanate hydratase (Staphylococcus aureus (strain COL)).